A 326-amino-acid polypeptide reads, in one-letter code: Apoptosis facilitator Bcl-2-like protein 14 (326 aa).

Ser44 is modified (phosphoserine). Residues 99 to 127 are disordered; the sequence is TEKEEEPPSSPKEIHAQGPFPVERQGRNQ. The BH3 signature appears at 211 to 225; the sequence is IVELLKYSGDQLGRE. The short motif at 307 to 314 is the BH2 element; that stretch reads WVQQNGGW.

It belongs to the Bcl-2 family. In terms of processing, phosphorylated by MELK, leading to inhibit its pro-apoptotic function.

Its subcellular location is the cytoplasm. Functionally, plays a role in apoptosis. This Rattus norvegicus (Rat) protein is Apoptosis facilitator Bcl-2-like protein 14 (Bcl2l14).